Reading from the N-terminus, the 268-residue chain is tRNA pseudouridine synthase A (268 aa).

Residue aspartate 54 is the Nucleophile of the active site. Residue tyrosine 112 coordinates substrate.

Belongs to the tRNA pseudouridine synthase TruA family. As to quaternary structure, homodimer.

The enzyme catalyses uridine(38/39/40) in tRNA = pseudouridine(38/39/40) in tRNA. In terms of biological role, formation of pseudouridine at positions 38, 39 and 40 in the anticodon stem and loop of transfer RNAs. The sequence is that of tRNA pseudouridine synthase A from Bordetella petrii (strain ATCC BAA-461 / DSM 12804 / CCUG 43448).